Consider the following 419-residue polypeptide: Peroxisomal membrane protein PMP47B (419 aa).

Solcar repeat units lie at residues 6 to 120 (YDDL…TGKT), 142 to 230 (LSVW…LKSF), and 239 to 369 (VTPV…LLIL). The chain crosses the membrane as a helical span at residues 12–32 (AFAGAGGGLLSMTLTYPLVTL). A compositionally biased stretch (basic and acidic residues) spans 44–53 (KNEEEEKENS). The segment at 44–69 (KNEEEEKENSNEDGSLSPKSSNTSNI) is disordered. The segment covering 56–69 (DGSLSPKSSNTSNI) has biased composition (polar residues). 3 helical membrane passes run 98 to 118 (SALFGIAVTNFVYYYFYELTG), 204 to 224 (FTGIVPALFLVLNPIIQYTIF), and 245 to 265 (LLLGAFGKLIATIITYPYITL). Positions 274–305 (MTENNEDSEKERTDSVQSLPEDGSDEDNSKEN) are disordered. Transmembrane regions (helical) follow at residues 310-330 (TINKIISKLPSPIVSMFIIGY) and 349-369 (LLQSILNAAFLFYFKEELLIL).

The protein belongs to the mitochondrial carrier (TC 2.A.29) family.

It localises to the peroxisome membrane. Its function is as follows. May have transport activity. In Candida boidinii (Yeast), this protein is Peroxisomal membrane protein PMP47B (PMP47B).